Consider the following 356-residue polypeptide: DNA polymerase IV (356 aa).

Residues 6 to 187 (IIHIDMDYFF…LDIGDFPGVG (182 aa)) form the UmuC domain. 2 residues coordinate Mg(2+): aspartate 10 and aspartate 105. Glutamate 106 is an active-site residue.

It belongs to the DNA polymerase type-Y family. In terms of assembly, monomer. It depends on Mg(2+) as a cofactor.

It is found in the cytoplasm. It catalyses the reaction DNA(n) + a 2'-deoxyribonucleoside 5'-triphosphate = DNA(n+1) + diphosphate. Its function is as follows. Poorly processive, error-prone DNA polymerase involved in untargeted mutagenesis. Copies undamaged DNA at stalled replication forks, which arise in vivo from mismatched or misaligned primer ends. These misaligned primers can be extended by PolIV. Exhibits no 3'-5' exonuclease (proofreading) activity. May be involved in translesional synthesis, in conjunction with the beta clamp from PolIII. This chain is DNA polymerase IV, found in Staphylococcus epidermidis (strain ATCC 35984 / DSM 28319 / BCRC 17069 / CCUG 31568 / BM 3577 / RP62A).